The chain runs to 189 residues: Putative manganese efflux pump MntP (189 aa).

6 helical membrane passes run 3 to 23 (LSAT…ASIG), 41 to 61 (LIFG…GLFA), 65 to 85 (IMEW…MRMI), 103 to 123 (GFWL…AIGV), 132 to 152 (IVHT…LGMM), and 167 to 187 (ILGG…HLGY).

Belongs to the MntP (TC 9.B.29) family.

The protein resides in the cell inner membrane. In terms of biological role, probably functions as a manganese efflux pump. This is Putative manganese efflux pump MntP from Serratia proteamaculans (strain 568).